The primary structure comprises 347 residues: Quinolinate synthase (347 aa).

Iminosuccinate-binding residues include His47 and Ser68. Cys113 is a [4Fe-4S] cluster binding site. Residues 139–141 and Ser156 each bind iminosuccinate; that span reads YAN. [4Fe-4S] cluster is bound at residue Cys200. Iminosuccinate is bound by residues 226–228 and Thr243; that span reads HPE. Cys297 contributes to the [4Fe-4S] cluster binding site.

It belongs to the quinolinate synthase family. Type 1 subfamily. Requires [4Fe-4S] cluster as cofactor.

Its subcellular location is the cytoplasm. It carries out the reaction iminosuccinate + dihydroxyacetone phosphate = quinolinate + phosphate + 2 H2O + H(+). Its pathway is cofactor biosynthesis; NAD(+) biosynthesis; quinolinate from iminoaspartate: step 1/1. Its function is as follows. Catalyzes the condensation of iminoaspartate with dihydroxyacetone phosphate to form quinolinate. This is Quinolinate synthase from Escherichia coli (strain K12 / MC4100 / BW2952).